Reading from the N-terminus, the 218-residue chain is Cytochrome b6 (218 aa).

Residues 35–55 traverse the membrane as a helical segment; sequence IFYCLGGITLVCFLIQFATGF. Cys38 provides a ligand contact to heme c. The heme b site is built by His89 and His103. Transmembrane regions (helical) follow at residues 93–113, 119–139, and 189–209; these read ASMMVLMLILHVFRVYLTGGF, LTWVTGVVMAVITVAFGVTGY, and LHTFVLPWSLAVFMLMHFLMI. The heme b site is built by His190 and His205.

It belongs to the cytochrome b family. PetB subfamily. As to quaternary structure, the 4 large subunits of the cytochrome b6-f complex are cytochrome b6, subunit IV (17 kDa polypeptide, PetD), cytochrome f and the Rieske protein, while the 4 small subunits are PetG, PetL, PetM and PetN. The complex functions as a dimer. Requires heme b as cofactor. The cofactor is heme c.

Its subcellular location is the cellular thylakoid membrane. Component of the cytochrome b6-f complex, which mediates electron transfer between photosystem II (PSII) and photosystem I (PSI), cyclic electron flow around PSI, and state transitions. This chain is Cytochrome b6, found in Prochlorococcus marinus (strain MIT 9515).